The sequence spans 438 residues: Na(+)/H(+) antiporter NhaA (438 aa).

The next 11 helical transmembrane spans lie at 23–43 (FGGI…NSFL), 62–82 (FFIG…LFFL), 104–124 (SFPV…YFFL), 133–153 (GFGI…MLLG), 162–182 (VFLI…IALF), 185–205 (TNLK…LALL), 221–241 (VLLW…AVVL), 302–322 (FLAP…NAGV), 337–357 (FGVI…ITFI), 372–392 (WWHI…SMFI), and 410–430 (IAIL…LFAL).

The protein belongs to the NhaA Na(+)/H(+) (TC 2.A.33) antiporter family.

Its subcellular location is the cell inner membrane. It catalyses the reaction Na(+)(in) + 2 H(+)(out) = Na(+)(out) + 2 H(+)(in). Its function is as follows. Na(+)/H(+) antiporter that extrudes sodium in exchange for external protons. The chain is Na(+)/H(+) antiporter NhaA from Helicobacter pylori (strain P12).